The following is a 257-amino-acid chain: Imidazole glycerol phosphate synthase subunit HisF (257 aa).

Catalysis depends on residues Asp-12 and Asp-131.

It belongs to the HisA/HisF family. Heterodimer of HisH and HisF.

The protein localises to the cytoplasm. It catalyses the reaction 5-[(5-phospho-1-deoxy-D-ribulos-1-ylimino)methylamino]-1-(5-phospho-beta-D-ribosyl)imidazole-4-carboxamide + L-glutamine = D-erythro-1-(imidazol-4-yl)glycerol 3-phosphate + 5-amino-1-(5-phospho-beta-D-ribosyl)imidazole-4-carboxamide + L-glutamate + H(+). It functions in the pathway amino-acid biosynthesis; L-histidine biosynthesis; L-histidine from 5-phospho-alpha-D-ribose 1-diphosphate: step 5/9. In terms of biological role, IGPS catalyzes the conversion of PRFAR and glutamine to IGP, AICAR and glutamate. The HisF subunit catalyzes the cyclization activity that produces IGP and AICAR from PRFAR using the ammonia provided by the HisH subunit. The chain is Imidazole glycerol phosphate synthase subunit HisF from Saccharophagus degradans (strain 2-40 / ATCC 43961 / DSM 17024).